The primary structure comprises 129 residues: Phosphoribosyl-AMP cyclohydrolase (129 aa).

Aspartate 82 serves as a coordination point for Mg(2+). A Zn(2+)-binding site is contributed by cysteine 83. Mg(2+) is bound by residues aspartate 84 and aspartate 86. The Zn(2+) site is built by cysteine 99 and cysteine 106.

The protein belongs to the PRA-CH family. Homodimer. Mg(2+) serves as cofactor. Zn(2+) is required as a cofactor.

It is found in the cytoplasm. The catalysed reaction is 1-(5-phospho-beta-D-ribosyl)-5'-AMP + H2O = 1-(5-phospho-beta-D-ribosyl)-5-[(5-phospho-beta-D-ribosylamino)methylideneamino]imidazole-4-carboxamide. Its pathway is amino-acid biosynthesis; L-histidine biosynthesis; L-histidine from 5-phospho-alpha-D-ribose 1-diphosphate: step 3/9. Its function is as follows. Catalyzes the hydrolysis of the adenine ring of phosphoribosyl-AMP. In Methanosarcina barkeri (strain Fusaro / DSM 804), this protein is Phosphoribosyl-AMP cyclohydrolase.